We begin with the raw amino-acid sequence, 425 residues long: Glucose-1-phosphate adenylyltransferase (425 aa).

Residues Tyr-110, Gly-175, 190 to 191, and Ser-208 contribute to the alpha-D-glucose 1-phosphate site; that span reads EK.

It belongs to the bacterial/plant glucose-1-phosphate adenylyltransferase family. Homotetramer.

It carries out the reaction alpha-D-glucose 1-phosphate + ATP + H(+) = ADP-alpha-D-glucose + diphosphate. It functions in the pathway glycan biosynthesis; glycogen biosynthesis. Involved in the biosynthesis of ADP-glucose, a building block required for the elongation reactions to produce glycogen. Catalyzes the reaction between ATP and alpha-D-glucose 1-phosphate (G1P) to produce pyrophosphate and ADP-Glc. The chain is Glucose-1-phosphate adenylyltransferase from Nitrosospira multiformis (strain ATCC 25196 / NCIMB 11849 / C 71).